A 945-amino-acid polypeptide reads, in one-letter code: Isoleucine--tRNA ligase (945 aa).

Basic and acidic residues predominate over residues Met-1–Pro-10. Residues Met-1 to Thr-21 are disordered. The short motif at Pro-66–His-76 is the 'HIGH' region element. Glu-581 contributes to the L-isoleucyl-5'-AMP binding site. A 'KMSKS' region motif is present at residues Lys-622–Ser-626. Lys-625 provides a ligand contact to ATP. Zn(2+) is bound by residues Cys-908, Cys-911, Cys-928, and Cys-931.

Belongs to the class-I aminoacyl-tRNA synthetase family. IleS type 1 subfamily. In terms of assembly, monomer. Zn(2+) serves as cofactor.

It localises to the cytoplasm. It carries out the reaction tRNA(Ile) + L-isoleucine + ATP = L-isoleucyl-tRNA(Ile) + AMP + diphosphate. Catalyzes the attachment of isoleucine to tRNA(Ile). As IleRS can inadvertently accommodate and process structurally similar amino acids such as valine, to avoid such errors it has two additional distinct tRNA(Ile)-dependent editing activities. One activity is designated as 'pretransfer' editing and involves the hydrolysis of activated Val-AMP. The other activity is designated 'posttransfer' editing and involves deacylation of mischarged Val-tRNA(Ile). This chain is Isoleucine--tRNA ligase, found in Burkholderia multivorans (strain ATCC 17616 / 249).